Consider the following 256-residue polypeptide: MSSTRIPVIALLAAAGRGTRLGGPIPKAFVTLRERTLLERSLQAMLTSESVDEIIILVSPDMETYARDLLRKRGLLNDPEGVRVRLVHGGGERADSVWAGLQAISLDDATPDAIVLIHDSARALTPPGMIARVVRKVHEGATAVIPVLPVSDTIKRVSPDGGVVVDTPNRAELRAVQTPQGFLLSELVAANEKFFADPNPGFIPTDDASLMEWYGADVVCVQGDPMAFKVTTPIDMMLAQRITDEAEPTIFEVPGD.

It belongs to the IspD/TarI cytidylyltransferase family. IspD subfamily.

It catalyses the reaction 2-C-methyl-D-erythritol 4-phosphate + CTP + H(+) = 4-CDP-2-C-methyl-D-erythritol + diphosphate. It participates in isoprenoid biosynthesis; isopentenyl diphosphate biosynthesis via DXP pathway; isopentenyl diphosphate from 1-deoxy-D-xylulose 5-phosphate: step 2/6. Functionally, catalyzes the formation of 4-diphosphocytidyl-2-C-methyl-D-erythritol from CTP and 2-C-methyl-D-erythritol 4-phosphate (MEP). In Corynebacterium glutamicum (strain ATCC 13032 / DSM 20300 / JCM 1318 / BCRC 11384 / CCUG 27702 / LMG 3730 / NBRC 12168 / NCIMB 10025 / NRRL B-2784 / 534), this protein is 2-C-methyl-D-erythritol 4-phosphate cytidylyltransferase.